Consider the following 424-residue polypeptide: Serine--tRNA ligase (424 aa).

230 to 232 (TAE) lines the L-serine pocket. Residue 261–263 (RSE) participates in ATP binding. Residue Glu-284 participates in L-serine binding. An ATP-binding site is contributed by 348–351 (EISS). Ser-384 contributes to the L-serine binding site.

It belongs to the class-II aminoacyl-tRNA synthetase family. Type-1 seryl-tRNA synthetase subfamily. As to quaternary structure, homodimer. The tRNA molecule binds across the dimer.

Its subcellular location is the cytoplasm. It carries out the reaction tRNA(Ser) + L-serine + ATP = L-seryl-tRNA(Ser) + AMP + diphosphate + H(+). The catalysed reaction is tRNA(Sec) + L-serine + ATP = L-seryl-tRNA(Sec) + AMP + diphosphate + H(+). It functions in the pathway aminoacyl-tRNA biosynthesis; selenocysteinyl-tRNA(Sec) biosynthesis; L-seryl-tRNA(Sec) from L-serine and tRNA(Sec): step 1/1. Its function is as follows. Catalyzes the attachment of serine to tRNA(Ser). Is also able to aminoacylate tRNA(Sec) with serine, to form the misacylated tRNA L-seryl-tRNA(Sec), which will be further converted into selenocysteinyl-tRNA(Sec). The sequence is that of Serine--tRNA ligase from Streptococcus pneumoniae serotype 19F (strain G54).